A 510-amino-acid chain; its full sequence is UDP-N-acetylmuramate--L-alanine ligase (510 aa).

The tract at residues 1–25 (MVETVGGKDAVAPAPARSPSPPAKN) is disordered. ATP is bound at residue 140–146 (GTHGKTT).

It belongs to the MurCDEF family.

The protein resides in the cytoplasm. It carries out the reaction UDP-N-acetyl-alpha-D-muramate + L-alanine + ATP = UDP-N-acetyl-alpha-D-muramoyl-L-alanine + ADP + phosphate + H(+). The protein operates within cell wall biogenesis; peptidoglycan biosynthesis. Its function is as follows. Cell wall formation. The sequence is that of UDP-N-acetylmuramate--L-alanine ligase from Synechococcus sp. (strain JA-3-3Ab) (Cyanobacteria bacterium Yellowstone A-Prime).